Consider the following 436-residue polypeptide: Protein disulfide-isomerase (436 aa).

Positions 216 to 365 (FLAGKIDPSI…VEDATESAKA (150 aa)) constitute a Thioredoxin domain. Residues Cys-266 and Cys-269 each act as nucleophile in the active site. An intrachain disulfide couples Cys-266 to Cys-269. The segment at 328-436 (TLVPHCRGSR…ASASSVKDEL (109 aa)) is disordered. A compositionally biased stretch (basic residues) spans 334–343 (RGSRPVHRRE). 2 stretches are compositionally biased toward low complexity: residues 362 to 377 (SAKA…AASA) and 385 to 436 (VKSG…KDEL). The short motif at 433-436 (KDEL) is the Prevents secretion from ER element.

This sequence belongs to the protein disulfide isomerase family.

It localises to the endoplasmic reticulum lumen. The enzyme catalyses Catalyzes the rearrangement of -S-S- bonds in proteins.. Participates in the folding of proteins containing disulfide bonds, may be involved in glycosylation, prolyl hydroxylation and triglyceride transfer. The polypeptide is Protein disulfide-isomerase (Alternaria alternata (Alternaria rot fungus)).